A 255-amino-acid polypeptide reads, in one-letter code: Transcription factor CAULIFLOWER (255 aa).

The region spanning 1–61 (MGRGRVELKR…GKLFEYSSES (61 aa)) is the MADS-box domain. The 91-residue stretch at 90–180 (QTNWSMEYSR…TKQIKERENI (91 aa)) folds into the K-box domain. Residues 90–198 (QTNWSMEYSR…EQLNRSVDDV (109 aa)) adopt a coiled-coil conformation.

Homodimer capable of binding to CArG-box sequences. As to expression, expressed in young flower primordia.

The protein localises to the nucleus. Its function is as follows. Probable transcription factor that promotes early floral meristem identity in synergy with APETALA1, FRUITFULL and LEAFY. Is required subsequently for the transition of an inflorescence meristem into a floral meristem. Seems to be partially redundant to the function of APETALA1. Positively regulates the APETALA1 and LEAFY expression. The sequence is that of Transcription factor CAULIFLOWER (CAL) from Arabidopsis thaliana (Mouse-ear cress).